Consider the following 518-residue polypeptide: PTS system mannitol-specific EIICB component (518 aa).

Residues 1 to 31 (MDTMSNSQQNKGIGRKVQAFGSFLSSMIMPN) are Cytoplasmic-facing. Positions 20 to 352 (FGSFLSSMIM…LKFTKDPKQD (333 aa)) constitute a PTS EIIC type-2 domain. A helical membrane pass occupies residues 32-53 (IGAFIAWGFIAAIFIDNGWFPN). Topologically, residues 54-57 (KDLA) are extracellular. A helical transmembrane segment spans residues 58–78 (QLAGPMITYLIPLLIAFSGGR). At 79-142 (LIHDLRGGII…QGFEMLFNNF (64 aa)) the chain is on the cytoplasmic side. A helical transmembrane segment spans residues 143-164 (SAGILGFIMTIFGFEVLAPIMK). The Extracellular portion of the chain corresponds to 165–173 (FIMHILSVG). The chain crosses the membrane as a helical span at residues 174–194 (VEALVHAHLLPLVSILVEPAK). The Cytoplasmic segment spans residues 195–281 (IVFLNNAINH…VLMRPLLFVS (87 aa)). A helical transmembrane segment spans residues 282–301 (VILGGMTGVATYSLLDFGFK). The Extracellular segment spans residues 302-321 (TPASPGSIIVYAINAPKGEF). Residues 322–343 (LHMLTGVVLAALVSFVVSALIL) form a helical membrane-spanning segment. The Cytoplasmic portion of the chain corresponds to 344–518 (KFTKDPKQDL…LINNLKEDQD (175 aa)). The tract at residues 369 to 406 (SVASKLSAKDDNKAADNKTAETTTATAASNKAEDKDSD) is disordered. Over residues 375-387 (SAKDDNKAADNKT) the composition is skewed to basic and acidic residues. The span at 388–398 (AETTTATAASN) shows a compositional bias: low complexity. Residues 426–518 (DHVIFACDAG…LINNLKEDQD (93 aa)) enclose the PTS EIIB type-2 domain. The Phosphocysteine intermediate role is filled by Cys432. Phosphocysteine; by EIIA is present on Cys432.

In terms of assembly, homodimer.

It localises to the cell membrane. It catalyses the reaction D-mannitol(out) + N(pros)-phospho-L-histidyl-[protein] = D-mannitol 1-phosphate(in) + L-histidyl-[protein]. Functionally, the phosphoenolpyruvate-dependent sugar phosphotransferase system (sugar PTS), a major carbohydrate active transport system, catalyzes the phosphorylation of incoming sugar substrates concomitantly with their translocation across the cell membrane. The enzyme II CmtAB PTS system is involved in D-mannitol transport. This chain is PTS system mannitol-specific EIICB component, found in Staphylococcus carnosus.